We begin with the raw amino-acid sequence, 497 residues long: Pseudooxynicotine dehydrogenase (497 aa).

Residues 1–43 (MANDKGDISKDGVSRRKFLGGAVIGAAAAAGVGSQILSLSATA) constitute a signal peptide (tat-type signal). Residues A70, E89, R97, W114, V286, S462, and I472 each coordinate FAD.

It belongs to the flavin monoamine oxidase family. As to quaternary structure, homodimer. FAD serves as cofactor. Predicted to be exported by the Tat system. The position of the signal peptide cleavage has not been experimentally proven.

It is found in the periplasm. It carries out the reaction pseudooxynicotine + 2 Fe(III)-[cytochrome c] + H2O = 4-oxo-4-(pyridin-3-yl)butanal + methylamine + 2 Fe(II)-[cytochrome c] + 2 H(+). Its pathway is alkaloid degradation; nicotine degradation. With respect to regulation, strongly inhibited by Ag(+), Co(2+), Cu(2+) and Hg(2+). In terms of biological role, involved in nicotine degradation. Catalyzes the deamination of pseudooxynicotine to 3-succinoylsemialdehyde-pyridine. This chain is Pseudooxynicotine dehydrogenase, found in Pseudomonas sp.